A 348-amino-acid polypeptide reads, in one-letter code: Anthranilate phosphoribosyltransferase (348 aa).

5-phospho-alpha-D-ribose 1-diphosphate is bound by residues G81, G84 to D85, N91 to T94, K109 to G117, and S121. Anthranilate is bound at residue G81. S93 lines the Mg(2+) pocket. N112 serves as a coordination point for anthranilate. R167 lines the anthranilate pocket. The Mg(2+) site is built by D226 and E227.

The protein belongs to the anthranilate phosphoribosyltransferase family. As to quaternary structure, homodimer. Mg(2+) serves as cofactor.

It carries out the reaction N-(5-phospho-beta-D-ribosyl)anthranilate + diphosphate = 5-phospho-alpha-D-ribose 1-diphosphate + anthranilate. It functions in the pathway amino-acid biosynthesis; L-tryptophan biosynthesis; L-tryptophan from chorismate: step 2/5. In terms of biological role, catalyzes the transfer of the phosphoribosyl group of 5-phosphorylribose-1-pyrophosphate (PRPP) to anthranilate to yield N-(5'-phosphoribosyl)-anthranilate (PRA). This is Anthranilate phosphoribosyltransferase from Ectopseudomonas mendocina (strain ymp) (Pseudomonas mendocina).